The sequence spans 847 residues: DNA ligase (847 aa).

The segment covering 1 to 22 (MSDTTTGSDAADAAVPATTPAD) has biased composition (low complexity). Residues 1 to 23 (MSDTTTGSDAADAAVPATTPADL) are disordered. NAD(+)-binding positions include 54-58 (DAEYD), 104-105 (SL), and E135. K137 serves as the catalytic N6-AMP-lysine intermediate. NAD(+)-binding residues include R158, E195, K326, and K350. Residues C444, C447, C463, and C469 each coordinate Zn(2+). The 90-residue stretch at 686 to 775 (AAGGVLAGLA…PDAIALPEAD (90 aa)) folds into the BRCT domain. Residues 770–847 (ALPEADPVPD…AEPDGPAETP (78 aa)) are disordered. 2 stretches are compositionally biased toward low complexity: residues 786-807 (DGGSAEDATAATAGAAEAATAE) and 819-833 (PAAAAAAPPTDVEAG).

The protein belongs to the NAD-dependent DNA ligase family. LigA subfamily. Requires Mg(2+) as cofactor. Mn(2+) serves as cofactor.

The enzyme catalyses NAD(+) + (deoxyribonucleotide)n-3'-hydroxyl + 5'-phospho-(deoxyribonucleotide)m = (deoxyribonucleotide)n+m + AMP + beta-nicotinamide D-nucleotide.. Its function is as follows. DNA ligase that catalyzes the formation of phosphodiester linkages between 5'-phosphoryl and 3'-hydroxyl groups in double-stranded DNA using NAD as a coenzyme and as the energy source for the reaction. It is essential for DNA replication and repair of damaged DNA. This chain is DNA ligase, found in Clavibacter sepedonicus (Clavibacter michiganensis subsp. sepedonicus).